Here is a 299-residue protein sequence, read N- to C-terminus: ATP phosphoribosyltransferase (299 aa).

The protein belongs to the ATP phosphoribosyltransferase family. Long subfamily. Mg(2+) is required as a cofactor.

The protein resides in the cytoplasm. The enzyme catalyses 1-(5-phospho-beta-D-ribosyl)-ATP + diphosphate = 5-phospho-alpha-D-ribose 1-diphosphate + ATP. It functions in the pathway amino-acid biosynthesis; L-histidine biosynthesis; L-histidine from 5-phospho-alpha-D-ribose 1-diphosphate: step 1/9. Feedback inhibited by histidine. In terms of biological role, catalyzes the condensation of ATP and 5-phosphoribose 1-diphosphate to form N'-(5'-phosphoribosyl)-ATP (PR-ATP). Has a crucial role in the pathway because the rate of histidine biosynthesis seems to be controlled primarily by regulation of HisG enzymatic activity. This is ATP phosphoribosyltransferase from Shewanella sp. (strain ANA-3).